A 219-amino-acid polypeptide reads, in one-letter code: Histone H1.4 (219 aa).

Positions 1–15 (MSETAPAAPAAPAPA) are enriched in low complexity. The segment at 1-41 (MSETAPAAPAAPAPAEKTPVKKKARKSAGAAKRKASGPPVS) is disordered. Serine 2 carries the post-translational modification N-acetylserine. Serine 2 is subject to Phosphoserine. Lysine 17 carries the N6-acetyllysine modification. Threonine 18 is modified (phosphothreonine). Residues 20 to 35 (VKKKARKSAGAAKRKA) show a composition bias toward basic residues. Lysine 26 bears the N6-acetyllysine; alternate mark. Lysine 26 carries the N6-methyllysine; alternate modification. Lysine 34 bears the N6-(beta-hydroxybutyryl)lysine; alternate mark. Residue lysine 34 is modified to N6-succinyllysine; alternate. At serine 36 the chain carries Phosphoserine. The H15 domain maps to 36–109 (SGPPVSELIT…GASGSFKLNK (74 aa)). The residue at position 52 (lysine 52) is an N6-(beta-hydroxybutyryl)lysine. Arginine 54 is modified (citrulline). N6-(beta-hydroxybutyryl)lysine is present on residues lysine 64, lysine 85, lysine 90, and lysine 106. The interval 91 to 219 (GTLVQTKGTG…KPKKAPAKKK (129 aa)) is disordered. A compositionally biased stretch (basic residues) spans 119–140 (KPKKAGAAKPKKPAGAAKKPKK). At threonine 146 the chain carries Phosphothreonine. Composition is skewed to basic residues over residues 149 to 160 (KGAKKTPKKAKK) and 168 to 185 (KKAK…KKAP). Serine 187 carries the phosphoserine modification. A compositionally biased stretch (basic residues) spans 192 to 219 (KAVKPKAAKPKAAKPKTAKPKKAPAKKK).

It belongs to the histone H1/H5 family. H1 histones are progressively phosphorylated during the cell cycle, becoming maximally phosphorylated during late G2 phase and M phase, and being dephosphorylated sharply thereafter. Post-translationally, acetylated at Lys-26. Deacetylated at Lys-26 by SIRT1. In terms of processing, citrullination at Arg-54 (H1R54ci) by PADI4 takes place within the DNA-binding site of H1 and results in its displacement from chromatin and global chromatin decondensation, thereby promoting pluripotency and stem cell maintenance.

The protein resides in the nucleus. The protein localises to the chromosome. Functionally, histone H1 protein binds to linker DNA between nucleosomes forming the macromolecular structure known as the chromatin fiber. Histones H1 are necessary for the condensation of nucleosome chains into higher-order structured fibers. Also acts as a regulator of individual gene transcription through chromatin remodeling, nucleosome spacing and DNA methylation. This is Histone H1.4 from Oryctolagus cuniculus (Rabbit).